Consider the following 301-residue polypeptide: MKLEGVIAATVTPFTKDGVNYEGLRIILSRIVEAGYHGVFPTSSTGEVTKLTPEERVKVMEVAKEVAGGKALVIAGTGTGDHLSTIDMVRRYKDVGVDVVLITPPYYIQYDWAAIYAFYKKVLDKTDVPVILYTIPLATGYNIPVEVFELVANEYSQVVGVKDSSGDFRYHLDLIYLLGRRLSVLQGLDMLFVPSLIMGAHGGILAGPNFLGKTTLEQYRLVKEGKTAEAVSLHNKLMPLWRFMGGCGLVGKLGGKWPTLYKLATQLVHGIDMGPPREPLPPVEDKDRKELEKILKELGLI.

Catalysis depends on charge relay system residues Ser44 and Tyr107. The Proton donor role is filled by Tyr133. The active-site Schiff-base intermediate with substrate is Lys162.

Belongs to the DapA family. In terms of assembly, homotetramer.

The protein localises to the cytoplasm. This is an uncharacterized protein from Pyrobaculum arsenaticum (strain DSM 13514 / JCM 11321 / PZ6).